The primary structure comprises 164 residues: Photosystem II extrinsic protein V (164 aa).

The signal sequence occupies residues 1-27; sequence MIPNRKIQLSLFAVIIVFETLLNQVYA. The heme c site is built by C64, C67, H68, and M131.

This sequence belongs to the cytochrome c family. PsbV subfamily. PSII is composed of 1 copy each of membrane proteins PsbA, PsbB, PsbC, PsbD, PsbE, PsbF, PsbH, PsbI, PsbJ, PsbK, PsbL, PsbM, PsbT, PsbY, PsbZ, Psb30/Ycf12, at least 3 peripheral proteins of the oxygen-evolving complex and a large number of cofactors. It forms dimeric complexes. The extrinsic subunits in red algae are PsbO (OEC33), PsbQ', cytochrome c-550 and PsbU. It depends on heme c as a cofactor.

Its subcellular location is the plastid. The protein resides in the chloroplast thylakoid membrane. Its function is as follows. One of the extrinsic, lumenal subunits of photosystem II (PSII). PSII is a light-driven water plastoquinone oxidoreductase, using light energy to abstract electrons from H(2)O, generating a proton gradient subsequently used for ATP formation. The extrinsic proteins stabilize the structure of photosystem II oxygen-evolving complex (OEC), the ion environment of oxygen evolution and protect the OEC against heat-induced inactivation. The chain is Photosystem II extrinsic protein V from Gracilaria tenuistipitata var. liui (Red alga).